An 898-amino-acid chain; its full sequence is Alanine--tRNA ligase (898 aa).

Residues His582, His586, Cys685, and His689 each contribute to the Zn(2+) site.

Belongs to the class-II aminoacyl-tRNA synthetase family. The cofactor is Zn(2+).

The protein resides in the cytoplasm. The catalysed reaction is tRNA(Ala) + L-alanine + ATP = L-alanyl-tRNA(Ala) + AMP + diphosphate. In terms of biological role, catalyzes the attachment of alanine to tRNA(Ala) in a two-step reaction: alanine is first activated by ATP to form Ala-AMP and then transferred to the acceptor end of tRNA(Ala). Also edits incorrectly charged Ser-tRNA(Ala) and Gly-tRNA(Ala) via its editing domain. The chain is Alanine--tRNA ligase from Mycolicibacterium vanbaalenii (strain DSM 7251 / JCM 13017 / BCRC 16820 / KCTC 9966 / NRRL B-24157 / PYR-1) (Mycobacterium vanbaalenii).